Consider the following 543-residue polypeptide: Zinc finger protein egl-43 (543 aa).

A positive regulatory (PR) domain region spans residues 2 to 62 (SIDTDFLTSV…NLIKEADDGE (61 aa)). 2 C2H2-type zinc fingers span residues 159–181 (HKCG…SHIH) and 187–209 (FRCH…RRVH). The C2H2-type 3; atypical zinc-finger motif lies at 213–233 (WTCPTCQSQMPSQAALTKHRP). The interval 299-380 (PDAECSSGHA…TSTKKRPTSH (82 aa)) is disordered. The span at 306–317 (GHASESSPTTTE) shows a compositional bias: polar residues. Residues 335-348 (TTSKSDDGEDRDSI) are compositionally biased toward basic and acidic residues. 2 C2H2-type zinc fingers span residues 444–466 (YTCK…LRTH) and 472–495 (YKCQ…RNIH). The tract at residues 496–543 (NKPNTSLTPHNHHRQRSLHNSTSTSTTTTTVHHPLLHLPGTSVPVPKV) is disordered. The segment covering 513–533 (LHNSTSTSTTTTTVHHPLLHL) has biased composition (low complexity).

Its subcellular location is the nucleus. In terms of biological role, probable transcription factor, required for migration of the hermaphrodite-specific motor neurons (HSNs) from the tail to the gonad primordium during HSN cell differentiation. Required for phasmid neuron development. Required to specify the pi-cell fate of ventral uterine precursor cell (VU) cells. Probable transcription factor, involved in lin-12 (Notch)-dependent anchor cell (AC) and ventral uterine (VU) precursor cell fate specification and in AC invasion. Prevents AC proliferation after AC cell specification by repressing lin-12 expression. May form a positive feedback loop, together with the transcription factor fos-1, that maintains mutual high levels of expression and so activates AC invasion. Functionally, dispensable for anchor cell (AC) invasion and for preventing AC proliferation. This Caenorhabditis elegans protein is Zinc finger protein egl-43.